A 93-amino-acid polypeptide reads, in one-letter code: Aspartyl/glutamyl-tRNA(Asn/Gln) amidotransferase subunit C (93 aa).

It belongs to the GatC family. Heterotrimer of A, B and C subunits.

It catalyses the reaction L-glutamyl-tRNA(Gln) + L-glutamine + ATP + H2O = L-glutaminyl-tRNA(Gln) + L-glutamate + ADP + phosphate + H(+). The catalysed reaction is L-aspartyl-tRNA(Asn) + L-glutamine + ATP + H2O = L-asparaginyl-tRNA(Asn) + L-glutamate + ADP + phosphate + 2 H(+). Allows the formation of correctly charged Asn-tRNA(Asn) or Gln-tRNA(Gln) through the transamidation of misacylated Asp-tRNA(Asn) or Glu-tRNA(Gln) in organisms which lack either or both of asparaginyl-tRNA or glutaminyl-tRNA synthetases. The reaction takes place in the presence of glutamine and ATP through an activated phospho-Asp-tRNA(Asn) or phospho-Glu-tRNA(Gln). This chain is Aspartyl/glutamyl-tRNA(Asn/Gln) amidotransferase subunit C, found in Methanococcoides burtonii (strain DSM 6242 / NBRC 107633 / OCM 468 / ACE-M).